We begin with the raw amino-acid sequence, 550 residues long: Spermatogenesis-associated protein 2 (550 aa).

Positions 83 to 156 (TVGTAFATLE…YNVRDHPGGA (74 aa)) constitute a PUB domain. The short motif at 320–337 (YHLSSLDEVDLYTERGLG) is the PIM motif element. The interval 457–480 (SKPVGSGPSPVGSLVSSGSSSSGG) is disordered.

Belongs to the SPATA2 family.

It localises to the cytoplasm. The protein localises to the nucleus. Its function is as follows. Bridging factor that mediates the recruitment of cyld to the LUBAC complex, thereby regulating TNF-alpha-induced necroptosis. Required to activate the 'Met-1'- (linear) and 'Lys-63'-linked deubiquitinase activities of cyld. The sequence is that of Spermatogenesis-associated protein 2 from Danio rerio (Zebrafish).